A 762-amino-acid polypeptide reads, in one-letter code: ABC-type oligopeptide transporter ABCB9 (762 aa).

Transmembrane regions (helical) follow at residues 7 to 27, 47 to 67, 84 to 104, 116 to 136, 181 to 201, 221 to 241, 315 to 335, and 412 to 432; these read VVVT…IYAF, VLDL…ATIG, LVIT…LLLF, FWAL…LWGL, VAFL…ETFL, FTTA…AAGI, VFMF…FPII, and SGLT…HLVI. Residues 184 to 467 form the ABC transmembrane type-1 domain; the sequence is LVAASFFLIV…VGSVYSGLMQ (284 aa). Residues 500–736 form the ABC transporter domain; it reads VDFENVTFTY…GGLYAKLVQR (237 aa). 535–542 is a binding site for ATP; that stretch reads GPSGSGKS.

It belongs to the ABC transporter superfamily. ABCB family. MHC peptide exporter (TC 3.A.1.209) subfamily. As to quaternary structure, homodimer. Interacts (via TMD0 region) with LAMP1; this interaction strongly stabilizes ABCB9 and protects ABCB9 against lysosomal degradation. Interacts (via TMD0 region) with LAMP2 (isoform LAMP-2B). Interacts (via TMD0) with YIF1B; this interaction allows (but is not essential) the ER-to-Golgi trafficking and strongly depends on a salt bridge within TMD0. In terms of tissue distribution, found in testis, particularly in the Sertoli cells of the seminiferous tubules. Also expressed in kidney, brain, heart, lung, spleen, thymus, intestine and testis. Higher expression detected in brain and testis than in thymus and intestine.

It is found in the lysosome membrane. It carries out the reaction a [oligopeptide](in) + ATP + H2O = a [oligopeptide](out) + ADP + phosphate + H(+). In terms of biological role, ATP-dependent low-affinity peptide transporter which translocates a broad spectrum of peptides from the cytosol to the lysosomal lumen for degradation. Displays a broad peptide length specificity from 6-mer up to at least 59-mer peptides with an optimum of 23-mers. Binds and transports smaller and larger peptides with the same affinity. Favors positively charged, aromatic or hydrophobic residues in the N- and C-terminal positions whereas negatively charged residues as well as asparagine and methionine are not favored. This Rattus norvegicus (Rat) protein is ABC-type oligopeptide transporter ABCB9.